Here is a 630-residue protein sequence, read N- to C-terminus: Plastin-1 (630 aa).

Met1 carries the N-acetylmethionine modification. EF-hand domains follow at residues 11 to 46 and 51 to 86; these read EELE…ASLP and KVRE…LKSK. Ca(2+) contacts are provided by Asp24, Asp26, Ser28, Tyr30, Glu35, Asp64, Asn66, Asp68, Arg70, and Glu75. Actin-binding stretches follow at residues 108 to 381 and 382 to 626; these read TSSI…GLHK and PDNN…GKGL. 4 consecutive Calponin-homology (CH) domains span residues 122-238, 266-377, 396-505, and 517-626; these read EEEK…KVGL, LSPE…NTYP, SKEE…RRYT, and KVND…GKGL.

Monomer. Post-translationally, phosphorylated.

It localises to the cytoplasm. The protein resides in the cell projection. The protein localises to the stereocilium. In terms of biological role, actin-bundling protein. In the inner ear, it is required for stereocilia formation. Mediates liquid packing of actin filaments that is necessary for stereocilia to grow to their proper dimensions. The chain is Plastin-1 (PLS1) from Bos taurus (Bovine).